Here is a 351-residue protein sequence, read N- to C-terminus: Ion-translocating oxidoreductase complex subunit D (351 aa).

Helical transmembrane passes span 18–38, 40–60, 87–107, and 121–141; these read IMLL…YFFG, GSLI…GAVL, LPPL…IVIA, and PAMV…TSWL. Threonine 185 carries the post-translational modification FMN phosphoryl threonine. The next 5 membrane-spanning stretches (helical) occupy residues 211-231, 241-261, 264-284, 298-318, and 320-340; these read VLAG…GLLL, IPVS…MIAP, FASP…FFIA, LIFG…GGYP, and GVAF…HYTQ.

It belongs to the NqrB/RnfD family. The complex is composed of six subunits: RnfA, RnfB, RnfC, RnfD, RnfE and RnfG. The cofactor is FMN.

Its subcellular location is the cell inner membrane. Part of a membrane-bound complex that couples electron transfer with translocation of ions across the membrane. The polypeptide is Ion-translocating oxidoreductase complex subunit D (Yersinia pseudotuberculosis serotype O:1b (strain IP 31758)).